The following is a 169-amino-acid chain: Histone H1.9 (169 aa).

Composition is skewed to polar residues over residues 1–10 and 19–36; these read MSLVSPSPDS and DASTSQVPSQSESKIGPN. Residues 1–36 are disordered; that stretch reads MSLVSPSPDSNAVMAGDQDASTSQVPSQSESKIGPN. One can recognise an H15 domain in the interval 43–116; it reads RKPTMSKVIL…GASGSFRLGK (74 aa). Residues Ser-62 and Ser-65 each carry the phosphoserine modification. The segment covering 118 to 142 has biased composition (basic residues); it reads QAFKSKCKAKRRQRRQKPGQRRTGS. The tract at residues 118–154 is disordered; sequence QAFKSKCKAKRRQRRQKPGQRRTGSRRSLLGSKKSNN.

The protein belongs to the histone H1/H5 family.

The protein resides in the nucleus. The protein localises to the chromosome. DNA-binding protein that may be implicated in chromatin remodeling and/or transcriptional regulation during spermiogenesis, the process of spermatid maturation into spermatozoa. This chain is Histone H1.9, found in Rattus norvegicus (Rat).